Consider the following 529-residue polypeptide: Calcium-dependent protein kinase 3 (529 aa).

The tract at residues 1 to 73 (MGHRHSKSKS…GRILGRPMEE (73 aa)) is disordered. The N-myristoyl glycine moiety is linked to residue glycine 2. Over residues 39–53 (SGSGTVGSSGSGTGG) the composition is skewed to gly residues. The region spanning 78-336 (YEFGRELGRG…AAEVLNHPWI (259 aa)) is the Protein kinase domain. Residues 84–92 (LGRGQFGVT) and lysine 107 contribute to the ATP site. The Proton acceptor role is filled by aspartate 202. Serine 242 is modified (phosphoserine). The tract at residues 342–372 (ASDKPLDNAVLSRMKQFRAMNKLKKMALKVI) is autoinhibitory domain. EF-hand domains are found at residues 379–414 (EEII…LGSK), 415–450 (ISEA…MNRI), 451–485 (ERED…KYNM), and 486–521 (GDDK…GNPE). Ca(2+) contacts are provided by aspartate 392, aspartate 394, asparagine 396, glutamate 403, aspartate 428, aspartate 430, aspartate 432, serine 434, glutamate 439, aspartate 464, aspartate 466, serine 468, tyrosine 470, glutamate 475, aspartate 499, aspartate 501, aspartate 503, lysine 505, and glutamate 510.

It belongs to the protein kinase superfamily. Ser/Thr protein kinase family. CDPK subfamily. Interacts with GHR1. As to expression, expressed in both guard cells and mesophyll cells.

It is found in the cytoplasm. It localises to the nucleus. It catalyses the reaction L-seryl-[protein] + ATP = O-phospho-L-seryl-[protein] + ADP + H(+). The catalysed reaction is L-threonyl-[protein] + ATP = O-phospho-L-threonyl-[protein] + ADP + H(+). Its activity is regulated as follows. Activated by calcium. Autophosphorylation may play an important role in the regulation of the kinase activity. Its function is as follows. May play a role in signal transduction pathways that involve calcium as a second messenger. Functions in abscisic acid (ABA) regulation of guard cell S-type anion- and Ca(2+)-permeable channels and stomatal closure. The protein is Calcium-dependent protein kinase 3 of Arabidopsis thaliana (Mouse-ear cress).